The primary structure comprises 288 residues: Acetyl-coenzyme A carboxylase carboxyl transferase subunit beta (288 aa).

Residues 34–288 (LFAKCPACKH…HLVAFHGGGQ (255 aa)) enclose the CoA carboxyltransferase N-terminal domain. The Zn(2+) site is built by Cys38, Cys41, Cys56, and Cys59. The C4-type zinc finger occupies 38-59 (CPACKHMIYKKDLGLAKICPTC).

Belongs to the AccD/PCCB family. As to quaternary structure, acetyl-CoA carboxylase is a heterohexamer composed of biotin carboxyl carrier protein (AccB), biotin carboxylase (AccC) and two subunits each of ACCase subunit alpha (AccA) and ACCase subunit beta (AccD). Requires Zn(2+) as cofactor.

Its subcellular location is the cytoplasm. It carries out the reaction N(6)-carboxybiotinyl-L-lysyl-[protein] + acetyl-CoA = N(6)-biotinyl-L-lysyl-[protein] + malonyl-CoA. It functions in the pathway lipid metabolism; malonyl-CoA biosynthesis; malonyl-CoA from acetyl-CoA: step 1/1. Component of the acetyl coenzyme A carboxylase (ACC) complex. Biotin carboxylase (BC) catalyzes the carboxylation of biotin on its carrier protein (BCCP) and then the CO(2) group is transferred by the transcarboxylase to acetyl-CoA to form malonyl-CoA. This Streptococcus pyogenes serotype M28 (strain MGAS6180) protein is Acetyl-coenzyme A carboxylase carboxyl transferase subunit beta.